Reading from the N-terminus, the 372-residue chain is Protein phosphatase Mn(2+)-dependent 1K (372 aa).

The N-terminal 29 residues, 1 to 29, are a transit peptide targeting the mitochondrion; that stretch reads MSTAALITLVRSGGNQVRRRVLLSSRLLQ. Positions 34-55 are disordered; it reads VTPTCHSSTSEPRCSRFDPDGS. A critical for association with the BCKDH complex region spans residues 46-61; the sequence is RCSRFDPDGSGSPATW. The PPM-type phosphatase domain maps to 94–346; that stretch reads NVGCASQIGK…DNSTAVVVPF (253 aa). Residues aspartate 127 and glycine 128 each contribute to the Mn(2+) site. Serine 248 is modified (phosphoserine). Residues aspartate 298 and aspartate 337 each contribute to the Mn(2+) site.

The protein belongs to the PP2C family. As to quaternary structure, monomer. Interacts with E1 and E2 components of the branched-chain alpha-ketoacid dehydrogenase (BCKDH) complex; this interaction requires colocalization in mitochondria. Interacts with BCKDHA but not with BCKDHB of the E1 component. Interacts with the 24-meric E2 core composed of DBT monomers with a 24:1 stoichiometry; the N-terminal region (residues 49-61) of PPM1K and C-terminal linker of the lipoyl domain of DBT (residues 145-160) are critical for this interaction, whereas the lipoyl prosthetic group is dispensable. Competes with BCKDK for binding to the E2 core; this interaction is modulated by branched-chain alpha-keto acids. At steady state, BCKDH holoenzyme preferentially binds BCKDK and BCKDHA is phosphorylated. In response to high levels of branched-chain alpha-keto acids, the inhibitory BCKDK is replaced by activating PPM1K leading to BCKDHA dephosphorylation and BCAA degradation. Mn(2+) is required as a cofactor.

The protein localises to the mitochondrion matrix. The catalysed reaction is O-phospho-L-seryl-[3-methyl-2-oxobutanoate dehydrogenase] + H2O = L-seryl-[3-methyl-2-oxobutanoate dehydrogenase] + phosphate. The enzyme catalyses O-phospho-L-seryl-[protein] + H2O = L-seryl-[protein] + phosphate. The protein operates within protein modification. Its activity is regulated as follows. Up-regulated upon interaction with the 24-meric DBT/E2 core of the BCKDH complex. Inhibited by Mg(2+) and Ca(2+) ions likely by competing with Mn(2+) ions for binding to the same metal-binding sites. Its function is as follows. Serine/threonine-protein phosphatase component of macronutrients metabolism. Forms a functional kinase and phosphatase pair with BCKDK, serving as a metabolic regulatory node that coordinates branched-chain amino acids (BCAAs) with glucose and lipid metabolism via two distinct phosphoprotein targets: mitochondrial BCKDHA subunit of the branched-chain alpha-ketoacid dehydrogenase (BCKDH) complex and cytosolic ACLY, a lipogenic enzyme of Krebs cycle. At high levels of branched-chain ketoacids, dephosphorylates and activates mitochondrial BCKDH complex, a multisubunit complex consisting of three multimeric components each involved in different steps of BCAA catabolism: E1 composed of BCKDHA and BCKDHB, E2 core composed of DBT monomers, and E3 composed of DLD monomers. Tightly associates with the E2 component of BCKDH complex and dephosphorylates BCKDHA on Ser-337. Regulates the reversible phosphorylation of ACLY in response to changes in cellular carbohydrate abundance such as occurs during fasting to feeding metabolic transition. At fasting state, appears to dephosphorylate ACLY on Ser-455 and inactivate it. Refeeding stimulates MLXIPL/ChREBP transcription factor, leading to increased BCKDK to PPM1K expression ratio, phosphorylation and activation of ACLY that ultimately results in the generation of malonyl-CoA and oxaloacetate immediate substrates of de novo lipogenesis and gluconeogenesis, respectively. Recognizes phosphosites having SxS or RxxS motifs and strictly depends on Mn(2+) ions for the phosphatase activity. Regulates Ca(2+)-induced opening of mitochondrial transition pore and apoptotic cell death. The protein is Protein phosphatase Mn(2+)-dependent 1K of Homo sapiens (Human).